Here is a 710-residue protein sequence, read N- to C-terminus: MSDSPTSSPPAPSADSAPPPDTSSDGSAAPPPTDSAPPPSPPADSSPPPALPSLPPAVFSPPPTVSSPPPPPLDSSPPPPPDLTPPPSSPPPPDAPPPIPIVFPPPIDSPPPESTNSPPPPEVFEPPPPPADEDESPPAPPPPEQLPPPASSPQGGPKKPKKHHPGPATSPPAPSAPATSPPAPPNAPPRNSSHALPPKSTAAGGPLTSPSRGVPSSGNSVPPPANSGGGYQGKTMAGFAIAGFAVIALMAVVFLVRRKKKRNIDAYSDSQYLPPSNFSIKSDGFLYGQNPTKGYSGPGGYNSQQQSNSGNSFGSQRGGGGYTRSGSAPDSAVMGSGQTHFTYEELTDITEGFSKHNILGEGGFGCVYKGKLNDGKLVAVKQLKVGSGQGDREFKAEVEIISRVHHRHLVSLVGYCIADSERLLIYEYVPNQTLEHHLHGKGRPVLEWARRVRIAIGSAKGLAYLHEDCHPKIIHRDIKSANILLDDEFEAQVADFGLAKLNDSTQTHVSTRVMGTFGYLAPEYAQSGKLTDRSDVFSFGVVLLELITGRKPVDQYQPLGEESLVEWARPLLHKAIETGDFSELVDRRLEKHYVENEVFRMIETAAACVRHSGPKRPRMVQVVRALDSEGDMGDISNGNKVGQSSAYDSGQYNNDTMKFRKMAFGFDDSSDSGMYSGDYSVQDSRKGSNGASSEFTRNETENRNFNNRRY.

The tract at residues methionine 1–glycine 229 is disordered. Topologically, residues methionine 1–threonine 235 are extracellular. Pro residues-rich tracts occupy residues serine 7–aspartate 21, alanine 29–proline 130, proline 137–serine 151, and alanine 168–proline 188. Residue asparagine 191 is glycosylated (N-linked (GlcNAc...) asparagine). The segment covering serine 209–serine 220 has biased composition (low complexity). Residues methionine 236–valine 256 form a helical membrane-spanning segment. The Cytoplasmic segment spans residues arginine 257–tyrosine 710. Residues glutamine 289 to methionine 334 are disordered. A compositionally biased stretch (low complexity) spans tyrosine 301–serine 315. Threonine 342 is modified (phosphothreonine). One can recognise a Protein kinase domain in the interval phenylalanine 353 to methionine 619. Residues leucine 359–valine 367 and lysine 381 each bind ATP. Tyrosine 426 carries the post-translational modification Phosphotyrosine. Aspartate 477 acts as the Proton acceptor in catalysis. A Phosphoserine modification is found at serine 510. Residues threonine 511 and threonine 516 each carry the phosphothreonine modification. Tyrosine 524 carries the post-translational modification Phosphotyrosine. Residues serine 676 to tyrosine 710 form a disordered region.

It belongs to the protein kinase superfamily. Ser/Thr protein kinase family. Interacts with KIPK1 and KIPK2 (via its cytosolic domain). Mostly expressed in roots, especially in root hairs.

It localises to the cell membrane. It carries out the reaction L-seryl-[protein] + ATP = O-phospho-L-seryl-[protein] + ADP + H(+). The catalysed reaction is L-threonyl-[protein] + ATP = O-phospho-L-threonyl-[protein] + ADP + H(+). Functionally, negatively regulates root hair elongation. The polypeptide is Proline-rich receptor-like protein kinase PERK13 (PERK13) (Arabidopsis thaliana (Mouse-ear cress)).